The following is a 230-amino-acid chain: Sugar fermentation stimulation protein homolog (230 aa).

This sequence belongs to the SfsA family.

The chain is Sugar fermentation stimulation protein homolog from Caldivirga maquilingensis (strain ATCC 700844 / DSM 13496 / JCM 10307 / IC-167).